A 201-amino-acid polypeptide reads, in one-letter code: 3-isopropylmalate dehydratase small subunit (201 aa).

Belongs to the LeuD family. LeuD type 1 subfamily. As to quaternary structure, heterodimer of LeuC and LeuD.

It catalyses the reaction (2R,3S)-3-isopropylmalate = (2S)-2-isopropylmalate. It participates in amino-acid biosynthesis; L-leucine biosynthesis; L-leucine from 3-methyl-2-oxobutanoate: step 2/4. Its function is as follows. Catalyzes the isomerization between 2-isopropylmalate and 3-isopropylmalate, via the formation of 2-isopropylmaleate. This chain is 3-isopropylmalate dehydratase small subunit, found in Shewanella oneidensis (strain ATCC 700550 / JCM 31522 / CIP 106686 / LMG 19005 / NCIMB 14063 / MR-1).